Reading from the N-terminus, the 61-residue chain is [Thr6]-bradykinyl-Val,Asp (61 aa).

The signal sequence occupies residues 1–22; the sequence is MSFLKKSLFLVLFLGLVSFSIC. A propeptide spanning residues 23–50 is cleaved from the precursor; that stretch reads EEEKRETEEEENEDEMDKESEEKRESPE. Residues 24-61 form a disordered region; it reads EEKRETEEEENEDEMDKESEEKRESPERPPGFTPFRVD. A compositionally biased stretch (acidic residues) spans 30–41; the sequence is EEEENEDEMDKE. 4-hydroxyproline; in form [Hyp3,Thr6]-bradykinyl-Val,Asp and [Hyp3,Thr6]-bradykinin is present on proline 53.

It belongs to the frog skin active peptide (FSAP) family. Bradykinin-related peptide subfamily. In terms of tissue distribution, expressed by the skin glands.

It is found in the secreted. Induces relaxation of rat smooth muscle from tail artery (EC(50)=16.8 nM) and contraction of that from ileum (EC(50)=205 nM), urinary bladder (EC(50)=895 nM) and uterus (EC(50)=60.3 nM). Binds to both bradykinin receptor B1 (BDKRB1) and B2 (BDKRB2). Its function is as follows. [Hyp3,Thr6]-bradykinin: Induces relaxation of rat smooth muscle from tail artery (EC(50)=56.7 nM) and contraction of that from ileum (EC(50)=588 nM), urinary bladder (EC(50)=4.6 uM) and uterus (EC(50)=3.9 nM). Binds to both bradykinin receptor B1 (BDKRB1) and B2 (BDKRB2). In arterial smooth muscle, the effect via BDKRB1 is stronger, in uterus, ileum and urinary bladder that via BDKRB2. Functionally, induces relaxation of rat smooth muscle from tail artery (EC(50)=10.8 nM) and contraction of that from ileum (EC(50)=645 nM), urinary bladder (EC(50)=1.1 uM) and uterus (EC(50)=1.2 uM). Binds to both bradykinin receptor B1 (BDKRB1) and B2 (BDKRB2). Apart from uterus smooth muscle, the effect via B2 is stronger. In terms of biological role, [Hyp3,Thr6]-bradykinyl-Val,Asp: Induces relaxation of rat smooth muscle from tail artery (EC(50)=3.5 nM) and contraction of that from ileum (EC(50)=223 nM), urinary bladder (EC(50)=1.5 uM) and uterus (EC(50)=356 nM). Binds to both bradykinin receptor B1 (BDKRB1) and B2 (BDKRB2); the effects via B2 a stronger. The chain is [Thr6]-bradykinyl-Val,Asp from Agalychnis callidryas (Red-eyed tree frog).